The following is a 374-amino-acid chain: Probable dual-specificity RNA methyltransferase RlmN (374 aa).

The segment covering 1–17 (MEKNEISEERRTQEKEK) has biased composition (basic and acidic residues). The disordered stretch occupies residues 1–22 (MEKNEISEERRTQEKEKQHGHR). Glu-119 (proton acceptor) is an active-site residue. Positions 125 to 360 (SEERITACIS…VTVRKSQGAT (236 aa)) constitute a Radical SAM core domain. Residues Cys-132 and Cys-365 are joined by a disulfide bond. Cys-139, Cys-143, and Cys-146 together coordinate [4Fe-4S] cluster. S-adenosyl-L-methionine is bound by residues 190 to 191 (GE), Ser-223, 246 to 248 (SLH), and Asn-322. The active-site S-methylcysteine intermediate is the Cys-365.

Belongs to the radical SAM superfamily. RlmN family. [4Fe-4S] cluster serves as cofactor.

It localises to the cytoplasm. It carries out the reaction adenosine(2503) in 23S rRNA + 2 reduced [2Fe-2S]-[ferredoxin] + 2 S-adenosyl-L-methionine = 2-methyladenosine(2503) in 23S rRNA + 5'-deoxyadenosine + L-methionine + 2 oxidized [2Fe-2S]-[ferredoxin] + S-adenosyl-L-homocysteine. The enzyme catalyses adenosine(37) in tRNA + 2 reduced [2Fe-2S]-[ferredoxin] + 2 S-adenosyl-L-methionine = 2-methyladenosine(37) in tRNA + 5'-deoxyadenosine + L-methionine + 2 oxidized [2Fe-2S]-[ferredoxin] + S-adenosyl-L-homocysteine. Its function is as follows. Specifically methylates position 2 of adenine 2503 in 23S rRNA and position 2 of adenine 37 in tRNAs. The polypeptide is Probable dual-specificity RNA methyltransferase RlmN (Chlorobaculum tepidum (strain ATCC 49652 / DSM 12025 / NBRC 103806 / TLS) (Chlorobium tepidum)).